Consider the following 248-residue polypeptide: PF03932 family protein CutC (248 aa).

This sequence belongs to the CutC family.

The protein resides in the cytoplasm. In Porphyromonas gingivalis (strain ATCC BAA-308 / W83), this protein is PF03932 family protein CutC.